A 739-amino-acid polypeptide reads, in one-letter code: Phosphoribosylformylglycinamidine synthase subunit PurL (739 aa).

His52 is an active-site residue. Residues Tyr55 and Lys94 each contribute to the ATP site. Glu96 provides a ligand contact to Mg(2+). Residues 97 to 100 and Arg119 each bind substrate; that span reads SHNH. The active-site Proton acceptor is His98. Mg(2+) is bound at residue Asp120. Gln243 serves as a coordination point for substrate. Asp273 provides a ligand contact to Mg(2+). 317-319 contributes to the substrate binding site; it reads ESQ. ATP is bound by residues Asp500 and Gly537. A Mg(2+)-binding site is contributed by Asn538. Ser540 serves as a coordination point for substrate.

Belongs to the FGAMS family. As to quaternary structure, monomer. Part of the FGAM synthase complex composed of 1 PurL, 1 PurQ and 2 PurS subunits.

It is found in the cytoplasm. The catalysed reaction is N(2)-formyl-N(1)-(5-phospho-beta-D-ribosyl)glycinamide + L-glutamine + ATP + H2O = 2-formamido-N(1)-(5-O-phospho-beta-D-ribosyl)acetamidine + L-glutamate + ADP + phosphate + H(+). Its pathway is purine metabolism; IMP biosynthesis via de novo pathway; 5-amino-1-(5-phospho-D-ribosyl)imidazole from N(2)-formyl-N(1)-(5-phospho-D-ribosyl)glycinamide: step 1/2. Functionally, part of the phosphoribosylformylglycinamidine synthase complex involved in the purines biosynthetic pathway. Catalyzes the ATP-dependent conversion of formylglycinamide ribonucleotide (FGAR) and glutamine to yield formylglycinamidine ribonucleotide (FGAM) and glutamate. The FGAM synthase complex is composed of three subunits. PurQ produces an ammonia molecule by converting glutamine to glutamate. PurL transfers the ammonia molecule to FGAR to form FGAM in an ATP-dependent manner. PurS interacts with PurQ and PurL and is thought to assist in the transfer of the ammonia molecule from PurQ to PurL. This chain is Phosphoribosylformylglycinamidine synthase subunit PurL, found in Enterococcus faecalis (strain ATCC 700802 / V583).